A 277-amino-acid polypeptide reads, in one-letter code: Shikimate dehydrogenase (NADP(+)) (277 aa).

Shikimate contacts are provided by residues 15–17 and threonine 62; that span reads SLS. Catalysis depends on lysine 66, which acts as the Proton acceptor. The shikimate site is built by asparagine 87 and aspartate 102. Residues 127–131, 151–156, and isoleucine 219 each bind NADP(+); these read GAGGA and NRTVDK. Tyrosine 221 is a shikimate binding site. Glycine 242 contributes to the NADP(+) binding site.

It belongs to the shikimate dehydrogenase family. As to quaternary structure, homodimer.

The enzyme catalyses shikimate + NADP(+) = 3-dehydroshikimate + NADPH + H(+). It participates in metabolic intermediate biosynthesis; chorismate biosynthesis; chorismate from D-erythrose 4-phosphate and phosphoenolpyruvate: step 4/7. Its function is as follows. Involved in the biosynthesis of the chorismate, which leads to the biosynthesis of aromatic amino acids. Catalyzes the reversible NADPH linked reduction of 3-dehydroshikimate (DHSA) to yield shikimate (SA). In Bacillus cereus (strain ZK / E33L), this protein is Shikimate dehydrogenase (NADP(+)).